The sequence spans 152 residues: D-aminoacyl-tRNA deacylase (152 aa).

A Gly-cisPro motif, important for rejection of L-amino acids motif is present at residues 142–143; that stretch reads GP.

The protein belongs to the DTD family. Homodimer.

Its subcellular location is the cytoplasm. The enzyme catalyses glycyl-tRNA(Ala) + H2O = tRNA(Ala) + glycine + H(+). The catalysed reaction is a D-aminoacyl-tRNA + H2O = a tRNA + a D-alpha-amino acid + H(+). In terms of biological role, an aminoacyl-tRNA editing enzyme that deacylates mischarged D-aminoacyl-tRNAs. Also deacylates mischarged glycyl-tRNA(Ala), protecting cells against glycine mischarging by AlaRS. Acts via tRNA-based rather than protein-based catalysis; rejects L-amino acids rather than detecting D-amino acids in the active site. By recycling D-aminoacyl-tRNA to D-amino acids and free tRNA molecules, this enzyme counteracts the toxicity associated with the formation of D-aminoacyl-tRNA entities in vivo and helps enforce protein L-homochirality. This is D-aminoacyl-tRNA deacylase from Burkholderia multivorans (strain ATCC 17616 / 249).